Reading from the N-terminus, the 946-residue chain is Glycine dehydrogenase (decarboxylating) (946 aa).

K700 bears the N6-(pyridoxal phosphate)lysine mark.

Belongs to the GcvP family. In terms of assembly, the glycine cleavage system is composed of four proteins: P, T, L and H. Pyridoxal 5'-phosphate is required as a cofactor.

It catalyses the reaction N(6)-[(R)-lipoyl]-L-lysyl-[glycine-cleavage complex H protein] + glycine + H(+) = N(6)-[(R)-S(8)-aminomethyldihydrolipoyl]-L-lysyl-[glycine-cleavage complex H protein] + CO2. Its function is as follows. The glycine cleavage system catalyzes the degradation of glycine. The P protein binds the alpha-amino group of glycine through its pyridoxal phosphate cofactor; CO(2) is released and the remaining methylamine moiety is then transferred to the lipoamide cofactor of the H protein. The polypeptide is Glycine dehydrogenase (decarboxylating) (Pseudomonas fluorescens (strain SBW25)).